The chain runs to 179 residues: ATP synthase subunit delta (179 aa).

This sequence belongs to the ATPase delta chain family. As to quaternary structure, F-type ATPases have 2 components, F(1) - the catalytic core - and F(0) - the membrane proton channel. F(1) has five subunits: alpha(3), beta(3), gamma(1), delta(1), epsilon(1). F(0) has three main subunits: a(1), b(2) and c(10-14). The alpha and beta chains form an alternating ring which encloses part of the gamma chain. F(1) is attached to F(0) by a central stalk formed by the gamma and epsilon chains, while a peripheral stalk is formed by the delta and b chains.

The protein localises to the cell membrane. F(1)F(0) ATP synthase produces ATP from ADP in the presence of a proton or sodium gradient. F-type ATPases consist of two structural domains, F(1) containing the extramembraneous catalytic core and F(0) containing the membrane proton channel, linked together by a central stalk and a peripheral stalk. During catalysis, ATP synthesis in the catalytic domain of F(1) is coupled via a rotary mechanism of the central stalk subunits to proton translocation. Its function is as follows. This protein is part of the stalk that links CF(0) to CF(1). It either transmits conformational changes from CF(0) to CF(1) or is implicated in proton conduction. This is ATP synthase subunit delta from Listeria monocytogenes serovar 1/2a (strain ATCC BAA-679 / EGD-e).